The sequence spans 181 residues: Large ribosomal subunit protein uL5 (181 aa).

It belongs to the universal ribosomal protein uL5 family. As to quaternary structure, part of the 50S ribosomal subunit; part of the 5S rRNA/L5/L18/L25 subcomplex. Contacts the 5S rRNA and the P site tRNA. Forms a bridge to the 30S subunit in the 70S ribosome.

This is one of the proteins that bind and probably mediate the attachment of the 5S RNA into the large ribosomal subunit, where it forms part of the central protuberance. In the 70S ribosome it contacts protein S13 of the 30S subunit (bridge B1b), connecting the 2 subunits; this bridge is implicated in subunit movement. Contacts the P site tRNA; the 5S rRNA and some of its associated proteins might help stabilize positioning of ribosome-bound tRNAs. In Sulfurimonas denitrificans (strain ATCC 33889 / DSM 1251) (Thiomicrospira denitrificans (strain ATCC 33889 / DSM 1251)), this protein is Large ribosomal subunit protein uL5.